Reading from the N-terminus, the 319-residue chain is Transaldolase (319 aa).

K125 (schiff-base intermediate with substrate) is an active-site residue.

Belongs to the transaldolase family. Type 1 subfamily. Homodimer.

Its subcellular location is the cytoplasm. It carries out the reaction D-sedoheptulose 7-phosphate + D-glyceraldehyde 3-phosphate = D-erythrose 4-phosphate + beta-D-fructose 6-phosphate. Its pathway is carbohydrate degradation; pentose phosphate pathway; D-glyceraldehyde 3-phosphate and beta-D-fructose 6-phosphate from D-ribose 5-phosphate and D-xylulose 5-phosphate (non-oxidative stage): step 2/3. In terms of biological role, transaldolase is important for the balance of metabolites in the pentose-phosphate pathway. The sequence is that of Transaldolase from Ralstonia pickettii (strain 12J).